Here is a 329-residue protein sequence, read N- to C-terminus: BTB/POZ domain-containing adapter for CUL3-mediated RhoA degradation protein 1 (329 aa).

Residues 1–31 (MSAEASGPAPAAAECLESPSPSSVEPGSPSY) form a disordered region. The BTB domain occupies 41–109 (KYVKLNVGGS…LRDGSVPLPE (69 aa)).

Belongs to the BACURD family. In terms of assembly, homotetramer; forms a two-fold symmetric tetramer in solution. Interacts with CUL3; interaction is direct and forms a 5:5 heterodecamer. Component of the BCR(KCTD13) E3 ubiquitin ligase complex, at least composed of CUL3, KCTD13/BACURD1 and RBX1. Interacts with RHOA; with a preference for RhoA-GDP. Interacts with POLD2 and PCNA. Interacts with SPRTN.

It is found in the nucleus. It functions in the pathway protein modification; protein ubiquitination. In terms of biological role, substrate-specific adapter of a BCR (BTB-CUL3-RBX1) E3 ubiquitin-protein ligase complex required for synaptic transmission. The BCR(KCTD13) E3 ubiquitin ligase complex mediates the ubiquitination of RHOA, leading to its degradation by the proteasome, thereby regulating the actin cytoskeleton and promoting synaptic transmission. The protein is BTB/POZ domain-containing adapter for CUL3-mediated RhoA degradation protein 1 (Kctd13) of Mus musculus (Mouse).